A 651-amino-acid chain; its full sequence is Methionine--tRNA ligase (651 aa).

A 'HIGH' region motif is present at residues 10–20 (AYTNGPLHLGH). Zn(2+) is bound by residues cysteine 142, cysteine 145, cysteine 154, and cysteine 157. Positions 320-324 (KMSTS) match the 'KMSKS' region motif. Residue threonine 323 coordinates ATP. The region spanning 550–651 (YLEKIDLRVG…KDIKAGSKVR (102 aa)) is the tRNA-binding domain.

It belongs to the class-I aminoacyl-tRNA synthetase family. MetG type 1 subfamily. As to quaternary structure, homodimer. Requires Zn(2+) as cofactor.

It is found in the cytoplasm. It carries out the reaction tRNA(Met) + L-methionine + ATP = L-methionyl-tRNA(Met) + AMP + diphosphate. Its function is as follows. Is required not only for elongation of protein synthesis but also for the initiation of all mRNA translation through initiator tRNA(fMet) aminoacylation. This chain is Methionine--tRNA ligase, found in Methanocaldococcus jannaschii (strain ATCC 43067 / DSM 2661 / JAL-1 / JCM 10045 / NBRC 100440) (Methanococcus jannaschii).